The following is a 726-amino-acid chain: MDAKTDDSAGKCPFTGGGRRGHRNRDWWPEQLDLDVLHRNSTLSDPMGEDFDYAEEFKSLDLNAVIQDLHALMTDSQDWWPADFGHYGGLMIRMAWHSAGTYRITDGRGGAGAGQQRFAPLNSWPDNANLDKARRMLWPIKQKYGRKISWADLMILAGNVALESMGFKTFGFAGGRKDVWEPEELFWGPEGTWLGDERYSGERQLSEPLAAVQMGLIYVNPEGPNGNPDPVAAAKDIRETFYRMAMNDEETVALIAGGHTFGKTHGAGDPSLIGPDPEGAAIEDQGLGWKSGHGTGFGADTITGGPEVTWSQTPTRWSNYFFENLFGYEWELTKSPAGAWQWKAKNAEATVPDAHDPSKKHVPTMLTTDLSLRFDPIYEKISRRFLENPDQFADAFARAWFKLTHRDMGPKVRYLGPLVPKETLIWQDPIPEVDHVLVDDQDIAGLKAKILASGLSVSELVSTAWASASTFRGSDKRGGANGARIRLAPQKDWEVNDPAQLAKVLQRLEAIQGEFNAAQAGGKKISLADLIVLGGCAAVEKAARDAGVDVKVPFTPGRMDASQEQTDIDSFRALEPRADGFRNYLSGRQFMMPEEALVDRAQLLRLTAPEMTVLLGGLRVLGANSGGSEHGVLTKQVGKLTNDFFVNLLTMNTQWQPIADGTYEGRDRKTNELKWRATRVDLIFGAHSQLRALAEVYACGDSQEKFVQDFVAAWTKVMNADRFDLA.

Residues Met-1–Arg-25 are disordered. Positions Trp-96–Tyr-218 form a cross-link, tryptophyl-tyrosyl-methioninium (Trp-Tyr) (with M-244). His-97 (proton acceptor) is an active-site residue. The segment at residues Tyr-218 to Met-244 is a cross-link (tryptophyl-tyrosyl-methioninium (Tyr-Met) (with W-96)). His-259 is a heme b binding site.

The protein belongs to the peroxidase family. Peroxidase/catalase subfamily. As to quaternary structure, homodimer or homotetramer. Heme b serves as cofactor. Post-translationally, formation of the three residue Trp-Tyr-Met cross-link is important for the catalase, but not the peroxidase activity of the enzyme.

The catalysed reaction is H2O2 + AH2 = A + 2 H2O. It carries out the reaction 2 H2O2 = O2 + 2 H2O. Its function is as follows. Bifunctional enzyme with both catalase and broad-spectrum peroxidase activity. The sequence is that of Catalase-peroxidase from Chelativorans sp. (strain BNC1).